A 40-amino-acid polypeptide reads, in one-letter code: Protamine-1 (40 aa).

A disordered region spans residues Met1 to His40.

In terms of tissue distribution, testis.

Its subcellular location is the nucleus. The protein resides in the chromosome. Protamines substitute for histones in the chromatin of sperm during the haploid phase of spermatogenesis. They compact sperm DNA into a highly condensed, stable and inactive complex. This Bufo japonicus (Japanese common toad) protein is Protamine-1 (PBP1).